The primary structure comprises 301 residues: Sulfate adenylyltransferase subunit 2 (301 aa).

Belongs to the PAPS reductase family. CysD subfamily. Heterodimer composed of CysD, the smaller subunit, and CysN.

It carries out the reaction sulfate + ATP + H(+) = adenosine 5'-phosphosulfate + diphosphate. It functions in the pathway sulfur metabolism; hydrogen sulfide biosynthesis; sulfite from sulfate: step 1/3. In terms of biological role, with CysN forms the ATP sulfurylase (ATPS) that catalyzes the adenylation of sulfate producing adenosine 5'-phosphosulfate (APS) and diphosphate, the first enzymatic step in sulfur assimilation pathway. APS synthesis involves the formation of a high-energy phosphoric-sulfuric acid anhydride bond driven by GTP hydrolysis by CysN coupled to ATP hydrolysis by CysD. The polypeptide is Sulfate adenylyltransferase subunit 2 (Citrifermentans bemidjiense (strain ATCC BAA-1014 / DSM 16622 / JCM 12645 / Bem) (Geobacter bemidjiensis)).